The sequence spans 191 residues: Protein YceI (191 aa).

Positions 1–22 are cleaved as a signal peptide; that stretch reads MKKNLLGFTFASLLFTTGSAVA.

The protein belongs to the UPF0312 family. Type 1 subfamily.

Its subcellular location is the periplasm. The chain is Protein YceI from Salmonella agona (strain SL483).